A 289-amino-acid polypeptide reads, in one-letter code: Ribosomal RNA small subunit methyltransferase A (289 aa).

6 residues coordinate S-adenosyl-L-methionine: His27, Leu29, Gly54, Glu76, Asp102, and Asn123.

Belongs to the class I-like SAM-binding methyltransferase superfamily. rRNA adenine N(6)-methyltransferase family. RsmA subfamily.

It localises to the cytoplasm. It carries out the reaction adenosine(1518)/adenosine(1519) in 16S rRNA + 4 S-adenosyl-L-methionine = N(6)-dimethyladenosine(1518)/N(6)-dimethyladenosine(1519) in 16S rRNA + 4 S-adenosyl-L-homocysteine + 4 H(+). Its function is as follows. Specifically dimethylates two adjacent adenosines (A1518 and A1519) in the loop of a conserved hairpin near the 3'-end of 16S rRNA in the 30S particle. May play a critical role in biogenesis of 30S subunits. The chain is Ribosomal RNA small subunit methyltransferase A from Maricaulis maris (strain MCS10) (Caulobacter maris).